The primary structure comprises 313 residues: Ribosomal protein L11 methyltransferase (313 aa).

Residues Thr-161, Gly-182, Asp-204, and Asn-247 each coordinate S-adenosyl-L-methionine.

The protein belongs to the methyltransferase superfamily. PrmA family.

The protein resides in the cytoplasm. It carries out the reaction L-lysyl-[protein] + 3 S-adenosyl-L-methionine = N(6),N(6),N(6)-trimethyl-L-lysyl-[protein] + 3 S-adenosyl-L-homocysteine + 3 H(+). Methylates ribosomal protein L11. The chain is Ribosomal protein L11 methyltransferase from Halalkalibacterium halodurans (strain ATCC BAA-125 / DSM 18197 / FERM 7344 / JCM 9153 / C-125) (Bacillus halodurans).